Consider the following 365-residue polypeptide: Histidinol-phosphate aminotransferase 2 (365 aa).

Position 221 is an N6-(pyridoxal phosphate)lysine (Lys-221).

This sequence belongs to the class-II pyridoxal-phosphate-dependent aminotransferase family. Histidinol-phosphate aminotransferase subfamily. As to quaternary structure, homodimer. Pyridoxal 5'-phosphate is required as a cofactor.

The catalysed reaction is L-histidinol phosphate + 2-oxoglutarate = 3-(imidazol-4-yl)-2-oxopropyl phosphate + L-glutamate. It functions in the pathway amino-acid biosynthesis; L-histidine biosynthesis; L-histidine from 5-phospho-alpha-D-ribose 1-diphosphate: step 7/9. The polypeptide is Histidinol-phosphate aminotransferase 2 (hisC2) (Bradyrhizobium diazoefficiens (strain JCM 10833 / BCRC 13528 / IAM 13628 / NBRC 14792 / USDA 110)).